Consider the following 89-residue polypeptide: Small ribosomal subunit protein uS14A (89 aa).

It belongs to the universal ribosomal protein uS14 family. Part of the 30S ribosomal subunit. Contacts proteins S3 and S10.

In terms of biological role, binds 16S rRNA, required for the assembly of 30S particles and may also be responsible for determining the conformation of the 16S rRNA at the A site. The sequence is that of Small ribosomal subunit protein uS14A from Oceanobacillus iheyensis (strain DSM 14371 / CIP 107618 / JCM 11309 / KCTC 3954 / HTE831).